Here is a 486-residue protein sequence, read N- to C-terminus: uncharacterized protein (486 aa).

2 consecutive ABC transporter domains span residues 2-241 (VEFK…KVFV) and 249-486 (FEKD…LLFL). 36–43 (GKNGEGKS) contributes to the ATP binding site.

The protein belongs to the ABC transporter superfamily.

This is an uncharacterized protein from Borreliella burgdorferi (strain ATCC 35210 / DSM 4680 / CIP 102532 / B31) (Borrelia burgdorferi).